The sequence spans 126 residues: Aspartate 1-decarboxylase (126 aa).

Serine 25 functions as the Schiff-base intermediate with substrate; via pyruvic acid in the catalytic mechanism. Serine 25 is subject to Pyruvic acid (Ser). Threonine 57 contributes to the substrate binding site. Tyrosine 58 (proton donor) is an active-site residue. Glycine 73–alanine 75 serves as a coordination point for substrate.

This sequence belongs to the PanD family. As to quaternary structure, heterooctamer of four alpha and four beta subunits. It depends on pyruvate as a cofactor. In terms of processing, is synthesized initially as an inactive proenzyme, which is activated by self-cleavage at a specific serine bond to produce a beta-subunit with a hydroxyl group at its C-terminus and an alpha-subunit with a pyruvoyl group at its N-terminus.

The protein resides in the cytoplasm. The catalysed reaction is L-aspartate + H(+) = beta-alanine + CO2. It functions in the pathway cofactor biosynthesis; (R)-pantothenate biosynthesis; beta-alanine from L-aspartate: step 1/1. In terms of biological role, catalyzes the pyruvoyl-dependent decarboxylation of aspartate to produce beta-alanine. This is Aspartate 1-decarboxylase from Xanthomonas oryzae pv. oryzae (strain MAFF 311018).